Reading from the N-terminus, the 326-residue chain is Phospho-N-acetylmuramoyl-pentapeptide-transferase (326 aa).

9 helical membrane-spanning segments follow: residues 3-23 (ISIS…PAFI), 51-71 (TMGG…FALF), 79-99 (VGMI…DDFL), 115-135 (LALQ…GGDI), 138-158 (VFGY…FWLV), 169-189 (GVDG…GVIA), 195-215 (MDIL…FIFN), 221-243 (VFMG…MALH), and 306-326 (FFFW…LYLM).

It belongs to the glycosyltransferase 4 family. MraY subfamily. The cofactor is Mg(2+).

The protein resides in the cell membrane. The enzyme catalyses UDP-N-acetyl-alpha-D-muramoyl-L-alanyl-gamma-D-glutamyl-L-lysyl-D-alanyl-D-alanine + di-trans,octa-cis-undecaprenyl phosphate = Mur2Ac(oyl-L-Ala-gamma-D-Glu-L-Lys-D-Ala-D-Ala)-di-trans,octa-cis-undecaprenyl diphosphate + UMP. Its pathway is cell wall biogenesis; peptidoglycan biosynthesis. Its function is as follows. Catalyzes the initial step of the lipid cycle reactions in the biosynthesis of the cell wall peptidoglycan: transfers peptidoglycan precursor phospho-MurNAc-pentapeptide from UDP-MurNAc-pentapeptide onto the lipid carrier undecaprenyl phosphate, yielding undecaprenyl-pyrophosphoryl-MurNAc-pentapeptide, known as lipid I. This chain is Phospho-N-acetylmuramoyl-pentapeptide-transferase, found in Streptococcus pneumoniae serotype 2 (strain D39 / NCTC 7466).